A 510-amino-acid chain; its full sequence is MAVGNGVLLHIAASLMLFFHVQKLVQYLWMNSRRHRLPPGPIGWPVLGALRLLGTMPHVALANMAKKYGPVMYLKVGSCGLAVASTPEAAKAFLKTLDMNFSNRPPNAGATHLAYNAQDMVFADYGPRWKLLRKLSNIHILGGKALQGWEEVRKKELGYMLYAMAESGRHGQPVVVSEMLTYAMANMLGQVMLSKRVFGSQGSESNEFKDMVVELMTVAGYFNIGDFIPSIAWMDLQGIQGGMKRLHKKFDALLTRLLEEHTASAHERKGSPDFLDFVVANGDNSEGERLQTVNIKALLLNMFTAGTDTSSSVIEWALAELLKNPIILRRAQEEMDGVIGRDRRFLEADISKLPYLQAICKEAFRKHPSTPLNLPRIASQACEVNGHYIPKGTRLSVNIWAIGRDPSVWENPNEFNPDRFLERKNAKIDPRGNDFELIPFGAGRRICAGTRLGILLVEYILGTLVHSFVWELPSSVIELNMDESFGLALQKAVPLAAMVTPRLPLHIYSP.

Cys-447 is a binding site for heme.

This sequence belongs to the cytochrome P450 family. Heme serves as cofactor.

The catalysed reaction is a 3',5'-unsubstituted flavanone + 2 reduced [NADPH--hemoprotein reductase] + 2 O2 = a 3',5'-dihydroxyflavanone + 2 oxidized [NADPH--hemoprotein reductase] + 2 H2O + 2 H(+). It functions in the pathway pigment biosynthesis; anthocyanin biosynthesis. In terms of biological role, catalyzes the 3'5'-hydroxylation of naringenin and eriodictyol to form 5,7,3,'4',5'-pentahydroxyflavanone and 3',5'-hydroxylation of dihydrokaempferol and dihydroquercetin to form dihydromyricetin. In Eustoma exaltatum subsp. russellianum (Bluebells), this protein is Flavonoid 3',5'-hydroxylase (CYP75A7).